The sequence spans 325 residues: Solute-binding protein RD1_1052 (325 aa).

A signal peptide spans 1-26; that stretch reads MRLFTKIKGLAAVTCVAALASSAAFA. Residues Glu75, 93–95, 148–151, Arg171, and Asn211 contribute to the D-mannonate site; these read GES and RGPR. L-galactonate is bound by residues Glu75, 93–95, 148–151, Arg171, and Asn211; these read GES and RGPR.

It belongs to the bacterial solute-binding protein 7 family. As to quaternary structure, the complex is comprised of an extracytoplasmic solute-binding protein and a heteromeric permease formed by two transmembrane proteins.

The protein resides in the periplasm. Solute-binding protein that binds L-galactonate and D-mannonate (in vitro). Probably part of a tripartite ATP-independent periplasmic (TRAP) transport system that mediates solute transport into the cytoplasm. The sequence is that of Solute-binding protein RD1_1052 from Roseobacter denitrificans (strain ATCC 33942 / OCh 114) (Erythrobacter sp. (strain OCh 114)).